A 247-amino-acid polypeptide reads, in one-letter code: Ribosomal RNA small subunit methyltransferase J (247 aa).

S-adenosyl-L-methionine contacts are provided by residues arginine 106–aspartate 107, glutamate 122–arginine 123, and aspartate 168.

It belongs to the methyltransferase superfamily. RsmJ family.

It localises to the cytoplasm. It carries out the reaction guanosine(1516) in 16S rRNA + S-adenosyl-L-methionine = N(2)-methylguanosine(1516) in 16S rRNA + S-adenosyl-L-homocysteine + H(+). Specifically methylates the guanosine in position 1516 of 16S rRNA. The protein is Ribosomal RNA small subunit methyltransferase J of Alcanivorax borkumensis (strain ATCC 700651 / DSM 11573 / NCIMB 13689 / SK2).